The following is a 317-amino-acid chain: Malate dehydrogenase (317 aa).

Residues 10–15 (GGGQIG) and aspartate 34 each bind NAD(+). Substrate-binding residues include arginine 83 and arginine 89. Residues asparagine 96 and 119–121 (ISN) contribute to the NAD(+) site. Residues asparagine 121 and arginine 152 each coordinate substrate. Histidine 176 (proton acceptor) is an active-site residue.

Belongs to the LDH/MDH superfamily. MDH type 3 family.

The catalysed reaction is (S)-malate + NAD(+) = oxaloacetate + NADH + H(+). In terms of biological role, catalyzes the reversible oxidation of malate to oxaloacetate. In Citrifermentans bemidjiense (strain ATCC BAA-1014 / DSM 16622 / JCM 12645 / Bem) (Geobacter bemidjiensis), this protein is Malate dehydrogenase.